A 470-amino-acid polypeptide reads, in one-letter code: Putative gustatory receptor 28b (470 aa).

Topologically, residues 1-76 are cytoplasmic; the sequence is MDIEMAKEPV…KTGKKAIKKT (76 aa). Residues 77 to 97 traverse the membrane as a helical segment; sequence IFGYINGIMHIAMFVFAYSLT. Over 98 to 119 the chain is Extracellular; that stretch reads IYNNCESVASYFFRSRITYFGD. The chain crosses the membrane as a helical span at residues 120 to 140; the sequence is LMQIVSGFIGVTVIYLTAFVP. At 141–175 the chain is on the cytoplasmic side; the sequence is NHRLERCLQKFHTMDVQLQTVGVKIMYSKVLRFSY. The helical transmembrane segment at 176–196 threads the bilayer; it reads MVLISMFLVNVLFTGGTFSVL. The Extracellular segment spans residues 197–204; it reads YSSEVAPT. Residues 205-225 traverse the membrane as a helical segment; sequence MALHFTFLIQHTVIAIAIALF. Residues 226 to 309 are Cytoplasmic-facing; the sequence is SCFTYLVEMR…ATANKYFTYQ (84 aa). The chain crosses the membrane as a helical span at residues 310–330; it reads LLTIISIAFLIIVFDAYYVLE. Over 331-346 the chain is Extracellular; it reads TLLGKSKRESKFKTVE. A helical transmembrane segment spans residues 347–367; it reads FVTFFSCQMILYLIAIISIVE. Residues 368–423 lie on the Cytoplasmic side of the membrane; the sequence is GSNRAIKKSEKTGGIVHSLLNKTKSAEVKEKLQQFSMQLMHLKINFTAAGLFNIDR. A helical membrane pass occupies residues 424–444; that stretch reads TLYFTISGALTTYLIILLQFT. The Extracellular segment spans residues 445–470; sequence SNSPNNGYGNGSSCCETFNNMTNHTL. N-linked (GlcNAc...) asparagine glycosylation is found at N454, N464, and N467.

Belongs to the insect chemoreceptor superfamily. Gustatory receptor (GR) family. Gr66a subfamily. As to expression, isoforms A and E have taste neuron-specific expression restricted to the labial palps, the internal taste organs in the pharynx, and the legs. In addition to expression in a large number of taste neurons, isoform A is also expressed in a few nonchemosensory neurons, including the campaniform sensilla of the wing, leg stretch receptors, and multiple dendritic neurons in the abdomen. Isoform B is the only receptor not expressed in gustatory receptor neurons in the labellum. We observe expression of this receptor in a single large cell at the base of each maxillary palp, in campaniform sensilla of the wing, and multiple dendritic neurons in the abdomen. Isoform C is expressed by many gustatory receptor neurons in the labial palps, the pharyngeal taste clusters, and taste neurons in the legs. In addition, isoform C expressed in a single cell at the base of the maxillary palps, neurons in the Johnston's organ (JO), campaniform sensilla of the wing, stretch receptors and the femoral chordotonal organ of the legs, and multiple dendritic neurons in the abdomen. Isoform D is expressed in a small number of gustatory receptor neurons in the labial palps, the ventral cibarial sense organ (VCSO), and legs. Atypical expression is observed in three neurons in the arista, campaniform sensilla of the wing, stretch and femoral chordotonal organ receptors in the legs, and multiple dendritic neurons in the abdomen. In larvae, Isoform A is expressed in neurons of the terminal external chemosensory organ and the dorsal external chemosensory organ; and isoform E is expressed in neurons of the terminal external chemosensory organ.

The protein localises to the cell membrane. In terms of biological role, probable gustatory receptor which mediates acceptance or avoidance behavior, depending on its substrates. Atypical expression also suggests nongustatory roles in the nervous system and tissues involved in proprioception, hygroreception, and other sensory modalities. It is also possible that it has chemosensory roles in the detection of internal ligands. The polypeptide is Putative gustatory receptor 28b (Gr28b) (Drosophila melanogaster (Fruit fly)).